The sequence spans 149 residues: Nucleoside diphosphate kinase (149 aa).

Residues K9, F57, R85, T91, R102, and N112 each coordinate ATP. The active-site Pros-phosphohistidine intermediate is H115.

This sequence belongs to the NDK family. As to quaternary structure, homotetramer. Requires Mg(2+) as cofactor.

It localises to the cytoplasm. It catalyses the reaction a 2'-deoxyribonucleoside 5'-diphosphate + ATP = a 2'-deoxyribonucleoside 5'-triphosphate + ADP. It carries out the reaction a ribonucleoside 5'-diphosphate + ATP = a ribonucleoside 5'-triphosphate + ADP. Functionally, major role in the synthesis of nucleoside triphosphates other than ATP. The ATP gamma phosphate is transferred to the NDP beta phosphate via a ping-pong mechanism, using a phosphorylated active-site intermediate. This chain is Nucleoside diphosphate kinase, found in Heliobacterium modesticaldum (strain ATCC 51547 / Ice1).